A 411-amino-acid polypeptide reads, in one-letter code: MVKQNDKIILAYSGGLDTSVAISWLKDKGYDVVACGIDVGEGKDMDAIKEKALKLGAVSSYMIDAKQEFAEEYALIALQGHTLYEGEYPLVSALSRPLIAKKLVTLAKQEHAVAIAHGCTGKGNDQVRFEVAIHALAPDIKIEAPVRDWHWSREEEIDYAKEHNIPVPINLDSPYSIDENLWGRANECGILEDPWQGAPADAFDRTKALADTPDTPTTLEITFEAGVPVALDGESLNLADLIIKLDQIAGEHGIGRIDHIENRLVGIKSREVYEAPAATVLLKAHKDLEDLTFERELAHFKPIIEQKLADTIYNGLWFSPLMEAMVAFLKQTQQVVNGVVRVQLFKGNVITEGRKSPNSLYDTNLATYTSADSFDQQAAVGFIKLWGLPTQVNAQVQAKAQAEAKTDKAHA.

Position 11-19 (Ala11–Ser19) interacts with ATP. An L-citrulline-binding site is contributed by Tyr88. An ATP-binding site is contributed by Gly118. Residues Thr120, Asn124, and Asp125 each contribute to the L-aspartate site. Asn124 is a binding site for L-citrulline. Arg128, Ser176, Glu261, and Tyr273 together coordinate L-citrulline.

Belongs to the argininosuccinate synthase family. Type 1 subfamily. In terms of assembly, homotetramer.

The protein localises to the cytoplasm. It catalyses the reaction L-citrulline + L-aspartate + ATP = 2-(N(omega)-L-arginino)succinate + AMP + diphosphate + H(+). It functions in the pathway amino-acid biosynthesis; L-arginine biosynthesis; L-arginine from L-ornithine and carbamoyl phosphate: step 2/3. The sequence is that of Argininosuccinate synthase from Lactiplantibacillus plantarum (strain ATCC BAA-793 / NCIMB 8826 / WCFS1) (Lactobacillus plantarum).